Here is a 280-residue protein sequence, read N- to C-terminus: Four and a half LIM domains protein 3 (280 aa).

Ser-2 is subject to N-acetylserine. A C4-type zinc finger spans residues 7–31 (CAKCNESLYGRKYIQTDSGPYCVPC). 2 LIM zinc-binding domains span residues 40–92 (CAEC…CNDC) and 101–153 (CSAC…CVPC). Lys-157 carries the post-translational modification N6-acetyllysine. LIM zinc-binding domains are found at residues 162–212 (CARC…CVAC) and 221–275 (CSSC…CQGC). Lys-235 is modified (N6-acetyllysine).

As to quaternary structure, interacts with SOX15; the interaction recruits FHL3 to FOXK1 promoters where it acts as a transcriptional coactivator of FOXK1. As to expression, expressed only in skeletal muscle.

The protein localises to the nucleus. The protein resides in the cytoplasm. In terms of biological role, recruited by SOX15 to FOXK1 promoters where it acts as a transcriptional coactivator of FOXK1. This is Four and a half LIM domains protein 3 (FHL3) from Homo sapiens (Human).